Here is a 202-residue protein sequence, read N- to C-terminus: Small ribosomal subunit protein uS2 (202 aa).

It belongs to the universal ribosomal protein uS2 family.

The protein is Small ribosomal subunit protein uS2 of Methanocorpusculum labreanum (strain ATCC 43576 / DSM 4855 / Z).